We begin with the raw amino-acid sequence, 420 residues long: ATP phosphoribosyltransferase regulatory subunit (420 aa).

The protein belongs to the class-II aminoacyl-tRNA synthetase family. HisZ subfamily. Heteromultimer composed of HisG and HisZ subunits.

It is found in the cytoplasm. Its pathway is amino-acid biosynthesis; L-histidine biosynthesis; L-histidine from 5-phospho-alpha-D-ribose 1-diphosphate: step 1/9. Its function is as follows. Required for the first step of histidine biosynthesis. May allow the feedback regulation of ATP phosphoribosyltransferase activity by histidine. The polypeptide is ATP phosphoribosyltransferase regulatory subunit (Bacillus cereus (strain AH820)).